Consider the following 309-residue polypeptide: 4-hydroxy-3-methylbut-2-enyl diphosphate reductase (309 aa).

Cys12 is a [4Fe-4S] cluster binding site. (2E)-4-hydroxy-3-methylbut-2-enyl diphosphate-binding residues include His43 and His77. Dimethylallyl diphosphate contacts are provided by His43 and His77. Residues His43 and His77 each contribute to the isopentenyl diphosphate site. Cys99 serves as a coordination point for [4Fe-4S] cluster. His127 provides a ligand contact to (2E)-4-hydroxy-3-methylbut-2-enyl diphosphate. His127 is a dimethylallyl diphosphate binding site. Position 127 (His127) interacts with isopentenyl diphosphate. Glu129 (proton donor) is an active-site residue. Thr167 is a (2E)-4-hydroxy-3-methylbut-2-enyl diphosphate binding site. Residue Cys197 coordinates [4Fe-4S] cluster. (2E)-4-hydroxy-3-methylbut-2-enyl diphosphate-binding residues include Ser225, Ser226, Asn227, and Ser269. Positions 225, 226, 227, and 269 each coordinate dimethylallyl diphosphate. Isopentenyl diphosphate contacts are provided by Ser225, Ser226, Asn227, and Ser269.

Belongs to the IspH family. [4Fe-4S] cluster serves as cofactor.

It catalyses the reaction isopentenyl diphosphate + 2 oxidized [2Fe-2S]-[ferredoxin] + H2O = (2E)-4-hydroxy-3-methylbut-2-enyl diphosphate + 2 reduced [2Fe-2S]-[ferredoxin] + 2 H(+). The catalysed reaction is dimethylallyl diphosphate + 2 oxidized [2Fe-2S]-[ferredoxin] + H2O = (2E)-4-hydroxy-3-methylbut-2-enyl diphosphate + 2 reduced [2Fe-2S]-[ferredoxin] + 2 H(+). Its pathway is isoprenoid biosynthesis; dimethylallyl diphosphate biosynthesis; dimethylallyl diphosphate from (2E)-4-hydroxy-3-methylbutenyl diphosphate: step 1/1. It functions in the pathway isoprenoid biosynthesis; isopentenyl diphosphate biosynthesis via DXP pathway; isopentenyl diphosphate from 1-deoxy-D-xylulose 5-phosphate: step 6/6. Catalyzes the conversion of 1-hydroxy-2-methyl-2-(E)-butenyl 4-diphosphate (HMBPP) into a mixture of isopentenyl diphosphate (IPP) and dimethylallyl diphosphate (DMAPP). Acts in the terminal step of the DOXP/MEP pathway for isoprenoid precursor biosynthesis. The sequence is that of 4-hydroxy-3-methylbut-2-enyl diphosphate reductase from Wolbachia pipientis wMel.